The primary structure comprises 450 residues: UDP-N-acetylmuramoylalanine--D-glutamate ligase (450 aa).

Position 119 to 125 (119 to 125 (GSNGKTT)) interacts with ATP.

The protein belongs to the MurCDEF family.

The protein resides in the cytoplasm. It carries out the reaction UDP-N-acetyl-alpha-D-muramoyl-L-alanine + D-glutamate + ATP = UDP-N-acetyl-alpha-D-muramoyl-L-alanyl-D-glutamate + ADP + phosphate + H(+). It functions in the pathway cell wall biogenesis; peptidoglycan biosynthesis. In terms of biological role, cell wall formation. Catalyzes the addition of glutamate to the nucleotide precursor UDP-N-acetylmuramoyl-L-alanine (UMA). This is UDP-N-acetylmuramoylalanine--D-glutamate ligase from Bacillus cereus (strain ATCC 10987 / NRS 248).